Here is a 1059-residue protein sequence, read N- to C-terminus: Ceruloplasmin (1059 aa).

The signal sequence occupies residues 1 to 19 (MKFLLLSALLFLHSSLAWT). Plastocyanin-like domains lie at 20–199 (REKH…LILC), 208–356 (KEEN…VRDC), 369–554 (HVRH…MKIC), 564–712 (RQKD…VNQC), 724–894 (GERT…LIVC), and 902–1055 (FNPK…PNQE). Residues Tyr55, Gly64, and Tyr67 each coordinate Na(+). His120 and His122 together coordinate Cu(2+). His120 is a binding site for O2. Position 128 (Lys128) interacts with Ca(2+). The N-linked (GlcNAc...) asparagine glycan is linked to Asn138. Gln143, Asp146, and Asp147 together coordinate Ca(2+). Cys173 and Cys199 form a disulfide bridge. Cu(2+) is bound by residues His179 and His181. His179 contacts O2. The N-linked (GlcNAc...) asparagine glycan is linked to Asn226. Ser255 serves as a coordination point for Na(+). Cys275 and Cys356 are disulfide-bonded. Residues His294, Cys337, and His342 each contribute to the Cu(2+) site. Asn396 is a glycosylation site (N-linked (GlcNAc...) asparagine). Residues Phe407, Gly416, and Tyr419 each contribute to the Na(+) site. Cys528 and Cys554 form a disulfide bridge. An N-linked (GlcNAc...) asparagine glycan is attached at Asn582. Ser611 contributes to the Na(+) binding site. A disulfide bond links Cys631 and Cys712. The Cu(2+) site is built by His650, Cys693, His698, and Met703. Cys693 acts as the Nucleophile; for glutathione peroxidase activity in catalysis. N-linked (GlcNAc...) asparagine glycosylation occurs at Asn756. Na(+)-binding residues include Phe761, Gly770, and Tyr773. Residues Cys868 and Cys894 are joined by a disulfide bond. Asn920 carries an N-linked (GlcNAc...) asparagine glycan. Position 949 (Ser949) interacts with Na(+). Cu(2+) is bound by residues His988, His991, His993, His1033, Cys1034, His1035, His1039, and Met1044. His991 and His993 together coordinate O2. His1035 contacts O2.

It belongs to the multicopper oxidase family. Found in a complex with MPO and LTF; interacts directly with MPO and LTF, which allows Fe(3+) incorporation into LTF, activation of CP ferroxidase activity and protection of CP antioxidant properties by MPO. Cu(2+) serves as cofactor. Synthesized in liver and secreted into the plasma. Also choroid plexus, yolk sac, placenta, and testis; not in stomach and small intestine. Fetal lung and liver.

It localises to the secreted. The enzyme catalyses 4 Fe(2+) + O2 + 4 H(+) = 4 Fe(3+) + 2 H2O. It carries out the reaction 4 Cu(+) + O2 + 4 H(+) = 4 Cu(2+) + 2 H2O. It catalyses the reaction a hydroperoxide + 2 glutathione = an alcohol + glutathione disulfide + H2O. The catalysed reaction is 4 nitric oxide + O2 + 2 H2O = 4 nitrite + 4 H(+). The enzyme catalyses 2 glutathione + H2O2 = glutathione disulfide + 2 H2O. Its function is as follows. Multifunctional blue, copper-binding (6-7 atoms per molecule) glycoprotein. It has ferroxidase activity oxidizing Fe(2+) to Fe(3+) without releasing radical oxygen species. It is involved in iron transport across the cell membrane. Copper ions provide a large number of enzymatic activites. Oxidizes highly toxic ferrous ions to the ferric state for further incorporation onto apo-transferrins, catalyzes Cu(+) oxidation and promotes the oxidation of biogenic amines such as norepinephrin and serotonin. Provides Cu(2+) ions for the ascorbate-mediated deaminase degradation of the heparan sulfate chains of GPC1. Has glutathione peroxidase-like activity, can remove both hydrogen peroxide and lipid hydroperoxide in the presence of thiols. Also shows NO-oxidase and NO2 synthase activities that determine endocrine NO homeostasis. This Rattus norvegicus (Rat) protein is Ceruloplasmin (Cp).